The following is a 142-amino-acid chain: Large ribosomal subunit protein uL13 (142 aa).

The protein belongs to the universal ribosomal protein uL13 family. As to quaternary structure, part of the 50S ribosomal subunit.

Its function is as follows. This protein is one of the early assembly proteins of the 50S ribosomal subunit, although it is not seen to bind rRNA by itself. It is important during the early stages of 50S assembly. The chain is Large ribosomal subunit protein uL13 from Desulfotalea psychrophila (strain LSv54 / DSM 12343).